We begin with the raw amino-acid sequence, 363 residues long: Holliday junction branch migration complex subunit RuvB (363 aa).

The tract at residues 1–32 (MSDVERTEFEIPGGIPPRRNGGQGRAADTNVD) is disordered. The interval 27–207 (ADTNVDANLK…FGFTAQMEFY (181 aa)) is large ATPase domain (RuvB-L). ATP is bound by residues Leu46, Arg47, Gly88, Lys91, Thr92, Thr93, 154–156 (EDF), Arg197, Tyr207, and Arg244. Mg(2+) is bound at residue Thr92. The segment at 208–278 (DVPDLTKVVK…AANAALIVFD (71 aa)) is small ATPAse domain (RuvB-S). A head domain (RuvB-H) region spans residues 281–363 (EVGLDRLDRA…EPPEGTIGDY (83 aa)). DNA is bound by residues Arg336 and Arg341.

Belongs to the RuvB family. In terms of assembly, homohexamer. Forms an RuvA(8)-RuvB(12)-Holliday junction (HJ) complex. HJ DNA is sandwiched between 2 RuvA tetramers; dsDNA enters through RuvA and exits via RuvB. An RuvB hexamer assembles on each DNA strand where it exits the tetramer. Each RuvB hexamer is contacted by two RuvA subunits (via domain III) on 2 adjacent RuvB subunits; this complex drives branch migration. In the full resolvosome a probable DNA-RuvA(4)-RuvB(12)-RuvC(2) complex forms which resolves the HJ.

The protein resides in the cytoplasm. The enzyme catalyses ATP + H2O = ADP + phosphate + H(+). The RuvA-RuvB-RuvC complex processes Holliday junction (HJ) DNA during genetic recombination and DNA repair, while the RuvA-RuvB complex plays an important role in the rescue of blocked DNA replication forks via replication fork reversal (RFR). RuvA specifically binds to HJ cruciform DNA, conferring on it an open structure. The RuvB hexamer acts as an ATP-dependent pump, pulling dsDNA into and through the RuvAB complex. RuvB forms 2 homohexamers on either side of HJ DNA bound by 1 or 2 RuvA tetramers; 4 subunits per hexamer contact DNA at a time. Coordinated motions by a converter formed by DNA-disengaged RuvB subunits stimulates ATP hydrolysis and nucleotide exchange. Immobilization of the converter enables RuvB to convert the ATP-contained energy into a lever motion, pulling 2 nucleotides of DNA out of the RuvA tetramer per ATP hydrolyzed, thus driving DNA branch migration. The RuvB motors rotate together with the DNA substrate, which together with the progressing nucleotide cycle form the mechanistic basis for DNA recombination by continuous HJ branch migration. Branch migration allows RuvC to scan DNA until it finds its consensus sequence, where it cleaves and resolves cruciform DNA. The protein is Holliday junction branch migration complex subunit RuvB of Corynebacterium glutamicum (strain R).